The chain runs to 399 residues: Acetate kinase (399 aa).

Asn10 is a binding site for Mg(2+). Lys17 lines the ATP pocket. Residue Arg91 participates in substrate binding. Asp148 functions as the Proton donor/acceptor in the catalytic mechanism. ATP is bound by residues 208-212 (HLGNG), 283-285 (DCR), and 331-335 (GIGEN). Glu385 contacts Mg(2+).

This sequence belongs to the acetokinase family. As to quaternary structure, homodimer. Requires Mg(2+) as cofactor. Mn(2+) is required as a cofactor.

It is found in the cytoplasm. The enzyme catalyses acetate + ATP = acetyl phosphate + ADP. It functions in the pathway metabolic intermediate biosynthesis; acetyl-CoA biosynthesis; acetyl-CoA from acetate: step 1/2. Catalyzes the formation of acetyl phosphate from acetate and ATP. Can also catalyze the reverse reaction. This Shewanella sp. (strain MR-4) protein is Acetate kinase.